Here is a 316-residue protein sequence, read N- to C-terminus: Protein lifeguard 2 (316 aa).

Positions 1–49 are disordered; that stretch reads MTQGKLSVANKAPGTEGQQQANGEKKDAPAVPSAPPSYEEATSGEGLKA. Helical transmembrane passes span 106 to 126, 138 to 158, and 165 to 185; these read VYTI…LFTF, PGWY…LACC, and FPWN…LTGM. Asparagine 191 carries N-linked (GlcNAc...) asparagine glycosylation. The next 4 membrane-spanning stretches (helical) occupy residues 194–214, 225–245, 251–271, and 290–310; these read SVLL…IFSF, GVLF…AILL, PWLH…FLAF, and IFGA…FLQL.

Belongs to the BI1 family. LFG subfamily. Interacts with FAS/TNFRSF6 and BAX. Expressed at high levels on dendrites and to a lesser extent on the soma and axons of neurons in various regions of brain.

Its subcellular location is the cell membrane. It is found in the membrane raft. The protein resides in the postsynaptic cell membrane. Functionally, antiapoptotic protein which protects cells uniquely from Fas-induced apoptosis. Regulates Fas-mediated apoptosis in neurons by interfering with caspase-8 activation. Plays a role in cerebellar development by affecting cerebellar size, internal granular layer (IGL) thickness, and Purkinje cell (PC) development. This chain is Protein lifeguard 2 (Faim2), found in Rattus norvegicus (Rat).